Consider the following 704-residue polypeptide: Mannan-binding lectin serine protease 1 (704 aa).

The signal sequence occupies residues 1 to 24 (MRFLSFWRLLLYHALCLALPEVSA). Residues 25 to 143 (HTVELNEMFG…TGFDAHYMAV (119 aa)) enclose the CUB 1 domain. Positions 25–189 (HTVELNEMFG…HTDNRTCRVE (165 aa)) are homodimerization. An interaction with MBL2 region spans residues 25–189 (HTVELNEMFG…HTDNRTCRVE (165 aa)). The interval 25–283 (HTVELNEMFG…STQTHSVQIL (259 aa)) is interaction with FCN2. Residues 25-305 (HTVELNEMFG…RLSYRAAGNE (281 aa)) form an interaction with MBL1 region. Asparagine 54 carries an N-linked (GlcNAc...) asparagine glycan. Residues glutamate 73, aspartate 81, aspartate 126, serine 128, aspartate 144, valine 145, and glutamate 147 each coordinate Ca(2+). An intrachain disulfide couples cysteine 78 to cysteine 96. In terms of domain architecture, EGF-like; calcium-binding spans 144 to 187 (DVDECKEREDEELSCDHYCHNYIGGYYCSCRFGYILHTDNRTCR). Intrachain disulfides connect cysteine 148/cysteine 162, cysteine 158/cysteine 171, cysteine 173/cysteine 186, and cysteine 190/cysteine 217. The Ca(2+) site is built by asparagine 164, tyrosine 165, and glycine 168. Asparagine 164 bears the (3R)-3-hydroxyasparagine mark. An N-linked (GlcNAc...) asparagine glycan is attached at asparagine 183. The CUB 2 domain occupies 190–302 (CSGNLFTQRT…RGWRLSYRAA (113 aa)). Residues glutamate 240, aspartate 250, aspartate 287, and serine 289 each coordinate Ca(2+). Cysteine 247 and cysteine 265 are joined by a disulfide. 2 Sushi domains span residues 304–369 (NECP…TCKI) and 370–439 (VDCG…TCLP). 8 cysteine pairs are disulfide-bonded: cysteine 306–cysteine 354, cysteine 334–cysteine 367, cysteine 372–cysteine 419, cysteine 402–cysteine 437, cysteine 441–cysteine 577, cysteine 480–cysteine 496, cysteine 619–cysteine 636, and cysteine 647–cysteine 677. N-linked (GlcNAc...) asparagine glycans are attached at residues asparagine 390 and asparagine 412. Positions 454-701 (IFNGRPAQKG…NKDWIQRITG (248 aa)) constitute a Peptidase S1 domain. Residues histidine 495 and aspartate 557 each act as charge relay system in the active site. The Charge relay system role is filled by serine 651.

Belongs to the peptidase S1 family. Homodimer. Interacts with the oligomeric lectins MBL2, FCN2 and FCN3; triggers the lectin pathway of complement through activation of C3. Interacts with SERPING1. Interacts with COLEC11; probably triggers the lectin pathway of complement. The iron and 2-oxoglutarate dependent 3-hydroxylation of aspartate and asparagine is (R) stereospecific within EGF domains. In terms of processing, N-glycosylated. Some N-linked glycan are of the complex-type. Post-translationally, autoproteolytic processing of the proenzyme produces the active enzyme composed on the heavy and the light chain held together by a disulfide bond. Isoform 1 but not isoform 2 is activated through autoproteolytic processing. Protein of the plasma which is primarily expressed by liver.

It localises to the secreted. Its activity is regulated as follows. Inhibited by SERPING1 and A2M. Functions in the lectin pathway of complement, which performs a key role in innate immunity by recognizing pathogens through patterns of sugar moieties and neutralizing them. The lectin pathway is triggered upon binding of mannan-binding lectin (MBL) and ficolins to sugar moieties which leads to activation of the associated proteases MASP1 and MASP2. Functions as an endopeptidase and may activate MASP2 or C2 or directly activate C3 the key component of complement reaction. Isoform 2 may have an inhibitory effect on the activation of the lectin pathway of complement or may cleave IGFBP5. Also plays a role in development. The sequence is that of Mannan-binding lectin serine protease 1 (Masp1) from Mus musculus (Mouse).